We begin with the raw amino-acid sequence, 421 residues long: Proton extrusion protein PxcA (421 aa).

The tract at residues 124 to 153 (PTVHSSNPDDSQLMTSKNNSKPVPDPESDD) is disordered. The segment covering 125-144 (TVHSSNPDDSQLMTSKNNSK) has biased composition (polar residues). 4 consecutive transmembrane segments (helical) span residues 203-223 (FVLLLVLVPLLTQQISKSFIV), 298-318 (AIKNIFADLISAAAFAILLIS), 345-365 (IIILFTDIFVGFHSPHGWEVI), and 381-401 (FIFLFIATFPVILDTIFKYWI).

It belongs to the CemA family.

The protein resides in the cell inner membrane. Required for H(+) efflux immediately after light irradiation to form a rapid H(+) concentration gradient across the thylakoid membranes. Together with PxcL, contributes to transient H(+) uptake following dark to light transition. The sequence is that of Proton extrusion protein PxcA from Synechococcus sp. (strain ATCC 27144 / PCC 6301 / SAUG 1402/1) (Anacystis nidulans).